Reading from the N-terminus, the 88-residue chain is Small ribosomal subunit protein bS20 (88 aa).

Residues 1–23 (MANSPQAKKRARQNDKARAHNAS) are disordered.

The protein belongs to the bacterial ribosomal protein bS20 family.

In terms of biological role, binds directly to 16S ribosomal RNA. The sequence is that of Small ribosomal subunit protein bS20 from Saccharophagus degradans (strain 2-40 / ATCC 43961 / DSM 17024).